A 437-amino-acid chain; its full sequence is Protein PhoH2 (437 aa).

Positions 7-134 (RTYVLDTSVL…LVSKDIPLRV (128 aa)) constitute a PINc domain.

This sequence in the N-terminal section; belongs to the PINc/VapC protein family. The protein in the C-terminal section; belongs to the PhoH family. Interacts with antitoxin PhoAT. Mg(2+) serves as cofactor.

The catalysed reaction is n ATP + n H2O + wound RNA = n ADP + n phosphate + unwound RNA.. It carries out the reaction ATP + H2O = ADP + phosphate + H(+). It catalyses the reaction GTP + H2O = GDP + phosphate + H(+). Toxic component of a type II toxin-antitoxin (TA) system. The possible cognate antitoxin is PhoAT; the toxin gene can be expressed in the absence of the antitoxin gene in an endogenous mc(2)155 double deletion. Unwinds and/or cleaves 5'-tailed RNA in vitro that starts with 5'-AC, the reaction requires hydrolyzable ATP; double-stranded (ds)RNA and dsDNA are not unwound or cleaved. Has ATPase and GTPase activities. The sequence is that of Protein PhoH2 from Mycolicibacterium smegmatis (strain ATCC 700084 / mc(2)155) (Mycobacterium smegmatis).